The sequence spans 468 residues: UDP-N-acetylmuramate--L-alanine ligase (468 aa).

Residue 114–120 (GTHGKTT) coordinates ATP.

It belongs to the MurCDEF family.

It is found in the cytoplasm. The enzyme catalyses UDP-N-acetyl-alpha-D-muramate + L-alanine + ATP = UDP-N-acetyl-alpha-D-muramoyl-L-alanine + ADP + phosphate + H(+). Its pathway is cell wall biogenesis; peptidoglycan biosynthesis. In terms of biological role, cell wall formation. This Methylorubrum populi (strain ATCC BAA-705 / NCIMB 13946 / BJ001) (Methylobacterium populi) protein is UDP-N-acetylmuramate--L-alanine ligase.